A 344-amino-acid polypeptide reads, in one-letter code: Methionine import ATP-binding protein MetN (344 aa).

The ABC transporter domain occupies 2–241 (IEINRVNKIF…PKTALAQEFI (240 aa)). Position 38–45 (38–45 (GSSGAGKS)) interacts with ATP.

The protein belongs to the ABC transporter superfamily. Methionine importer (TC 3.A.1.24) family. In terms of assembly, the complex is composed of two ATP-binding proteins (MetN), two transmembrane proteins (MetI) and a solute-binding protein (MetQ).

It localises to the cell inner membrane. It carries out the reaction L-methionine(out) + ATP + H2O = L-methionine(in) + ADP + phosphate + H(+). The enzyme catalyses D-methionine(out) + ATP + H2O = D-methionine(in) + ADP + phosphate + H(+). Functionally, part of the ABC transporter complex MetNIQ involved in methionine import. Responsible for energy coupling to the transport system. In Aliivibrio fischeri (strain ATCC 700601 / ES114) (Vibrio fischeri), this protein is Methionine import ATP-binding protein MetN.